The chain runs to 391 residues: Nucleosome assembly protein 1-like 1 (391 aa).

Residues 1-10 are compositionally biased toward basic and acidic residues; it reads MADIDNKEQS. The segment at 1 to 32 is disordered; that stretch reads MADIDNKEQSELDQDLDDVEEVEEEETGEETK. Ala2 carries the post-translational modification N-acetylalanine. Ser10 carries the post-translational modification Phosphoserine. Acidic residues predominate over residues 11 to 28; it reads ELDQDLDDVEEVEEEETG. Thr62 and Thr64 each carry phosphothreonine. Residue Ser69 is modified to Phosphoserine. At Lys116 the chain carries N6-acetyllysine. The NAP1L motif signature appears at 125–150; that stretch reads YEPTEEECEWKPDEEDEISEELKEKA. Over residues 132–143 the composition is skewed to acidic residues; it reads CEWKPDEEDEIS. The interval 132–163 is disordered; that stretch reads CEWKPDEEDEISEELKEKAKIEDEKKDEEKED. Ser143 is subject to Phosphoserine. Basic and acidic residues predominate over residues 144–163; the sequence is EELKEKAKIEDEKKDEEKED. The short motif at 273–279 is the Nuclear localization signal element; sequence IKKKQKH. A compositionally biased stretch (acidic residues) spans 346-376; it reads AIEDDDDDYDEEGEEADEEGEEEGDEENDPD. A disordered region spans residues 346 to 391; sequence AIEDDDDDYDEEGEEADEEGEEEGDEENDPDYDPKKDQNPAECKQQ. 5-glutamyl polyglycine is present on residues Glu359 and Glu360. Basic and acidic residues predominate over residues 377–391; that stretch reads YDPKKDQNPAECKQQ. The residue at position 388 (Cys388) is a Cysteine methyl ester. A lipid anchor (S-farnesyl cysteine) is attached at Cys388. Residues 389 to 391 constitute a propeptide, removed in mature form; that stretch reads KQQ.

Belongs to the nucleosome assembly protein (NAP) family. Homodimer. The dimer binds strongly and sequentially to single and double H2A-H2B heterodimers. Interacts with ERCC6; this interaction increases ERCC6 processivity. Interacts with RAD54. Interacts with SETD1A. In terms of processing, polyglycylated by TTLL10 on glutamate residues, resulting in polyglycine chains on the gamma-carboxyl group. Both polyglutamylation and polyglycylation modifications can coexist on the same protein on adjacent residues, and lowering polyglycylation levels increases polyglutamylation, and reciprocally. Post-translationally, polyglutamylated by TTLL4 on glutamate residues, resulting in polyglutamate chains on the gamma-carboxyl group. Both polyglutamylation and polyglycylation modifications can coexist on the same protein on adjacent residues, and lowering polyglycylation levels increases polyglutamylation, and reciprocally.

The protein resides in the nucleus. Its subcellular location is the melanosome. The protein localises to the cytoplasm. In terms of biological role, histone chaperone that plays a role in the nuclear import of H2A-H2B and nucleosome assembly. Also participates in several important DNA repair mechanisms: greatly enhances ERCC6-mediated chromatin remodeling which is essential for transcription-coupled nucleotide excision DNA repair. Also stimulates homologous recombination (HR) by RAD51 and RAD54 which is essential in mitotic DNA double strand break (DSB) repair. Plays a key role in the regulation of embryonic neurogenesis. Promotes the proliferation of neural progenitors and inhibits neuronal differentiation during cortical development. Regulates neurogenesis via the modulation of RASSF10; regulates RASSF10 expression by promoting SETD1A-mediated H3K4 methylation at the RASSF10 promoter. The sequence is that of Nucleosome assembly protein 1-like 1 (NAP1L1) from Pongo abelii (Sumatran orangutan).